A 247-amino-acid chain; its full sequence is MAAISPWLSSPQSFSNPRVTITDSRRCSSISAAISVLDSSNEEQHRISSRDHVGMKRRDVMLQIASSVFFLPLAISPAFAETNASEAFRVYTDETNKFEISIPQDWQVGQAEPNGFKSITAFYPQETSTSNVSIAITGLGPDFTRMESFGKVEAFAETLVSGLDRSWQKPVGVTAKLIDSRASKGFYYIEYTLQNPGEARKHLYSAIGMATNGWYNRLYTVTGQFTDEESAEQSSKIQKTVKSFRFI.

A chloroplast-targeting transit peptide spans 1-26 (MAAISPWLSSPQSFSNPRVTITDSRR). The transit peptide at 27–80 (CSSISAAISVLDSSNEEQHRISSRDHVGMKRRDVMLQIASSVFFLPLAISPAFA) directs the protein to the thylakoid.

Belongs to the PsbP family.

Its subcellular location is the plastid. It localises to the chloroplast thylakoid lumen. This is PsbP domain-containing protein 3, chloroplastic (PPD3) from Arabidopsis thaliana (Mouse-ear cress).